A 317-amino-acid chain; its full sequence is Melanocyte-stimulating hormone receptor (317 aa).

Over 1–37 the chain is Extracellular; that stretch reads MPVQGSQRRLLGSLNSTPTAPPHLGLAANQTGARCLE. An N-linked (GlcNAc...) asparagine glycan is attached at asparagine 29. A helical transmembrane segment spans residues 38-63; it reads VSIPDGLFLSLGLVSLVENVLVVTAI. Over 64–72 the chain is Cytoplasmic; that stretch reads AKNRNLHSP. Residues 73–93 form a helical membrane-spanning segment; that stretch reads MYCFICCLALSDLLVSGSNML. Topologically, residues 94-118 are extracellular; it reads ETAVILLLEAGALAARAAVVQQLDN. Residues 119–140 form a helical membrane-spanning segment; that stretch reads VIDVITCSSMLSSLCFLGAIAV. Topologically, residues 141–163 are cytoplasmic; sequence DRYISIFYALRYHSIVTLPRARR. The chain crosses the membrane as a helical span at residues 164-183; the sequence is AVAAIWVASVLFSMLFIAYY. Over 184–191 the chain is Extracellular; it reads DHAAVLLC. Residues 192 to 211 traverse the membrane as a helical segment; sequence LVVFFLAMLVLMAVLYIHML. Residues 212–240 lie on the Cytoplasmic side of the membrane; sequence VRACQHAQGIARLHKRQRPAHQGFGLKGA. The helical transmembrane segment at 241–266 threads the bilayer; it reads ATLTILLGIFFLCWGPFFLHLTLIVL. Over 267 to 279 the chain is Extracellular; that stretch reads CPQHPTCSCIFKN. The chain crosses the membrane as a helical span at residues 280 to 300; sequence FNLFLALIICNAIIDPLIYAF. At 301–317 the chain is on the cytoplasmic side; that stretch reads RSQELRRTLKEVLLCSW. A lipid anchor (S-palmitoyl cysteine) is attached at cysteine 315.

This sequence belongs to the G-protein coupled receptor 1 family. As to quaternary structure, interacts with MGRN1, but does not undergo MGRN1-mediated ubiquitination; this interaction competes with GNAS-binding and thus inhibits agonist-induced cAMP production. Interacts with OPN3; the interaction results in a decrease in MC1R-mediated cAMP signaling and ultimately a decrease in melanin production in melanocytes.

Its subcellular location is the cell membrane. In terms of biological role, receptor for MSH (alpha, beta and gamma) and ACTH. The activity of this receptor is mediated by G proteins which activate adenylate cyclase. Mediates melanogenesis, the production of eumelanin (black/brown) and phaeomelanin (red/yellow), via regulation of cAMP signaling in melanocytes. This is Melanocyte-stimulating hormone receptor (MC1R) from Cercopithecus diana (Diana monkey).